The sequence spans 169 residues: Der GTPase-activating protein YihI (169 aa).

Disordered regions lie at residues 1–98 and 144–169; these read MKPS…PQAE and GLSY…LRGN. The segment covering 10-19 has biased composition (basic residues); sequence SKGHAKARRK. Residues 20 to 30 show a composition bias toward basic and acidic residues; sequence TREELDQEARD. Positions 31–40 are enriched in basic residues; that stretch reads RKRQKKRRGH. Residues 49–58 are compositionally biased toward polar residues; that stretch reads GNTTSGSKGQ. Acidic residues predominate over residues 147–159; sequence YDDDEEEEEDEKQ. Residues 160–169 show a composition bias toward basic and acidic residues; sequence EDMMRLLRGN.

It belongs to the YihI family. In terms of assembly, interacts with Der.

Functionally, a GTPase-activating protein (GAP) that modifies Der/EngA GTPase function. May play a role in ribosome biogenesis. The polypeptide is Der GTPase-activating protein YihI (Escherichia coli O139:H28 (strain E24377A / ETEC)).